Consider the following 305-residue polypeptide: Cytochrome c biogenesis protein CcsA (305 aa).

The next 8 membrane-spanning stretches (helical) occupy residues 4-24 (VLGLGLFAFALLLLALPLAFW), 32-52 (SGLVTLLIATANLALTAQLVL), 58-78 (GHFPISNLYESLCFLAWACTL), 91-111 (IVAAAATPMGLGCIAFASFAL), 136-156 (VIMVSYAALLVGSLLSVAVLV), 212-232 (TITVGFLLLTVGIISGAVWAN), 246-263 (TWALICWLVYAAYLHTRL), and 275-295 (VASAGLVVIGVCYIGVNLLGI).

Belongs to the CcmF/CycK/Ccl1/NrfE/CcsA family. May interact with ccs1.

The protein localises to the cellular thylakoid membrane. Functionally, required during biogenesis of c-type cytochromes (cytochrome c6 and cytochrome f) at the step of heme attachment. This chain is Cytochrome c biogenesis protein CcsA, found in Synechococcus sp. (strain CC9311).